The sequence spans 111 residues: UPF0060 membrane protein NFA_36830 (111 aa).

Transmembrane regions (helical) follow at residues 7–27, 33–53, 62–82, and 91–111; these read LVLFGLAALAEIGGAWLVWQG, GLWWIAAGVIALGAYGFVATF, VLAAYGGVFVVGSLAWGVLVD, and LLGAGICLVGVAVIMYAPRGG.

This sequence belongs to the UPF0060 family.

The protein localises to the cell membrane. The polypeptide is UPF0060 membrane protein NFA_36830 (Nocardia farcinica (strain IFM 10152)).